The sequence spans 142 residues: Gonadotropin subunit beta-2 (142 aa).

The first 23 residues, 1–23 (MLGLHVGTLISLFLCILLEPVEG), serve as a signal peptide directing secretion. Disulfide bonds link C29-C77, C43-C92, C46-C130, C54-C108, C58-C110, and C113-C120. An N-linked (GlcNAc...) asparagine glycan is attached at N33.

Belongs to the glycoprotein hormones subunit beta family. In terms of assembly, heterodimer of an alpha and a beta chain.

The protein localises to the secreted. In terms of biological role, involved in gametogenesis and steroidogenesis. The chain is Gonadotropin subunit beta-2 (cgbb) from Oncorhynchus keta (Chum salmon).